The sequence spans 588 residues: Adenine deaminase (588 aa).

It belongs to the metallo-dependent hydrolases superfamily. Adenine deaminase family. As to quaternary structure, homodimer. Mn(2+) serves as cofactor.

The catalysed reaction is adenine + H2O + H(+) = hypoxanthine + NH4(+). In Escherichia coli O157:H7 (strain EC4115 / EHEC), this protein is Adenine deaminase.